The chain runs to 606 residues: Isocitrate dehydrogenase kinase/phosphatase (606 aa).

ATP-binding positions include 354 to 360 and lysine 375; that span reads APGFKGT. Aspartate 414 is a catalytic residue.

The protein belongs to the AceK family.

It is found in the cytoplasm. The catalysed reaction is L-seryl-[isocitrate dehydrogenase] + ATP = O-phospho-L-seryl-[isocitrate dehydrogenase] + ADP + H(+). Bifunctional enzyme which can phosphorylate or dephosphorylate isocitrate dehydrogenase (IDH) on a specific serine residue. This is a regulatory mechanism which enables bacteria to bypass the Krebs cycle via the glyoxylate shunt in response to the source of carbon. When bacteria are grown on glucose, IDH is fully active and unphosphorylated, but when grown on acetate or ethanol, the activity of IDH declines drastically concomitant with its phosphorylation. The protein is Isocitrate dehydrogenase kinase/phosphatase of Rhodopseudomonas palustris (strain BisB5).